The chain runs to 486 residues: Probable FAD-binding monooxygenase ltbD (486 aa).

Positions 186-243 are disordered; sequence PAGDGGTNDQGPSRAQSTASSGGSGRPRSTESPQSGAQASTTPTSPPTTQSTGDDPAA. A compositionally biased stretch (polar residues) spans 194–206; that stretch reads DQGPSRAQSTASS. A compositionally biased stretch (low complexity) spans 220–241; that stretch reads SGAQASTTPTSPPTTQSTGDDP.

Belongs to the FAD-binding monooxygenase family. In terms of assembly, homodimer. FAD serves as cofactor.

Its function is as follows. Probable FAD-binding monooxygenase; part of the gene cluster that mediates the biosynthesis of luteodienoside A, a glycosylated polyketide consisting of an unusual 1-O-beta-D-glucopyranosyl-myo-inositol (glucinol) ester of 3-hydroxy-2,2,4-trimethylocta-4,6-dienoic acid. The HR-PKS ltbA produces the trimethylated polyketide chain from acetyl-CoA, malonyl-CoA and S-adenosylmethionine (SAM), and the ltbA cAT domain then uses glucinol produced by the glycosyltransferase ltbB as an offloading substrate to release luteodienoside A. Since ltbA and ltbB are sufficient for the biosynthesis of luteodienoside A, the functions of the methyltransferase ltbC and the FAD-binding monooxygenase ltbD within the pathway remain obscur. The chain is Probable FAD-binding monooxygenase ltbD from Aspergillus luteorubrus.